Consider the following 332-residue polypeptide: Holliday junction branch migration complex subunit RuvB (332 aa).

The large ATPase domain (RuvB-L) stretch occupies residues 1–181; sequence MERIISELEM…FGVSHKMEYY (181 aa). ATP-binding residues include L20, R21, G62, K65, T66, T67, R171, Y181, and R218. A Mg(2+)-binding site is contributed by T66. Residues 182 to 252 are small ATPAse domain (RuvB-S); that stretch reads NENEIKSIII…SAKNALDMLG (71 aa). The head domain (RuvB-H) stretch occupies residues 255–332; that stretch reads SNGLDDLDRN…QHFKKVEVKI (78 aa). The DNA site is built by R291, R310, and R315.

Belongs to the RuvB family. Homohexamer. Forms an RuvA(8)-RuvB(12)-Holliday junction (HJ) complex. HJ DNA is sandwiched between 2 RuvA tetramers; dsDNA enters through RuvA and exits via RuvB. An RuvB hexamer assembles on each DNA strand where it exits the tetramer. Each RuvB hexamer is contacted by two RuvA subunits (via domain III) on 2 adjacent RuvB subunits; this complex drives branch migration. In the full resolvosome a probable DNA-RuvA(4)-RuvB(12)-RuvC(2) complex forms which resolves the HJ.

The protein localises to the cytoplasm. The catalysed reaction is ATP + H2O = ADP + phosphate + H(+). Functionally, the RuvA-RuvB-RuvC complex processes Holliday junction (HJ) DNA during genetic recombination and DNA repair, while the RuvA-RuvB complex plays an important role in the rescue of blocked DNA replication forks via replication fork reversal (RFR). RuvA specifically binds to HJ cruciform DNA, conferring on it an open structure. The RuvB hexamer acts as an ATP-dependent pump, pulling dsDNA into and through the RuvAB complex. RuvB forms 2 homohexamers on either side of HJ DNA bound by 1 or 2 RuvA tetramers; 4 subunits per hexamer contact DNA at a time. Coordinated motions by a converter formed by DNA-disengaged RuvB subunits stimulates ATP hydrolysis and nucleotide exchange. Immobilization of the converter enables RuvB to convert the ATP-contained energy into a lever motion, pulling 2 nucleotides of DNA out of the RuvA tetramer per ATP hydrolyzed, thus driving DNA branch migration. The RuvB motors rotate together with the DNA substrate, which together with the progressing nucleotide cycle form the mechanistic basis for DNA recombination by continuous HJ branch migration. Branch migration allows RuvC to scan DNA until it finds its consensus sequence, where it cleaves and resolves cruciform DNA. This Fusobacterium nucleatum subsp. nucleatum (strain ATCC 25586 / DSM 15643 / BCRC 10681 / CIP 101130 / JCM 8532 / KCTC 2640 / LMG 13131 / VPI 4355) protein is Holliday junction branch migration complex subunit RuvB.